An 84-amino-acid polypeptide reads, in one-letter code: Large ribosomal subunit protein bL27 (84 aa).

The disordered stretch occupies residues 1–21 (MAHKKAGGSTRNGRDSNPKYL).

It belongs to the bacterial ribosomal protein bL27 family.

In Francisella tularensis subsp. holarctica (strain FTNF002-00 / FTA), this protein is Large ribosomal subunit protein bL27.